A 496-amino-acid polypeptide reads, in one-letter code: Fibronectin type III and SPRY domain-containing protein 1 (496 aa).

Positions 4-99 form a coiled coil; that stretch reads QREALRKIIK…ALESSEELLE (96 aa). The 58-residue stretch at 105-162 folds into the COS domain; it reads LQAMDSEDFPQAAKQIKDGVTMAPAFRLSLKAKVSDNMSHLMVDFAQERQMLQALKFL. The Fibronectin type-III domain occupies 164–268; that stretch reads VPSAPVIDLA…EPVTLETPAF (105 aa). One can recognise a B30.2/SPRY domain in the interval 268-477; sequence FMFRLDASTS…VTTGLQVPSA (210 aa). Positions 301 to 336 are disordered; the sequence is KAREKDGKGRTASPINSPARGTPSPKRMPSGRGGRD. An omega-N-methylarginine mark is found at arginine 310 and arginine 320.

Oligomerization is required for binding to microtubules. As to expression, highly expressed in brain tissues, including cerebellum, cerebral cortex, medulla, occipital pole, frontal lobe, temporal lobe and putamen. Lower expression in spinal cord.

The protein localises to the cytoplasm. The protein resides in the cytoskeleton. Its subcellular location is the microtubule organizing center. It localises to the centrosome. It is found in the nucleus. The protein localises to the cleavage furrow. Its function is as follows. May be involved in microtubule organization and stabilization. The polypeptide is Fibronectin type III and SPRY domain-containing protein 1 (FSD1) (Homo sapiens (Human)).